The chain runs to 623 residues: MASQYAAELCMLLVEDNFGELFGRIFSTLHRYERLTLPRLLGLTRLSENRLRAALVAMIQHHLVHFYTAVEEGGVTYYSANMQAAYYLIRSGKILEFVEDRLGKYAATVMSTIMYLGHAQVSHLDTLPELRSDASKTNGVNEGEHDRPEGENETNGTNGEHVSDQPALLHPTLKALAGHGYIVRVREAHFQSIADNILNIERQIRSGDSVQSMKGKKLEEFVVEKTADMLKERLDGDLTRGLIVNGVPRGVKRSQTNGVSDDNETEKARFDYDDGEDEDEENEWLDDEVPMESSLTVRVNYEKLDVALRNRRFLELAERGAPPESAQIYDYLLRRIEYQTSKCRDASEIPREGEEGEQYSVPIPLSALARDIDPYLDLAGSLGPTNTPANNRLGKRTFDDTVDDNDDDHGATGNRTYEIDQHLSLLAQPPLNLTSKRLNGGIINWTVEFRHLARKLRHLELERIVEARYGDVALRVLRVLQAKGKLDEKRLQEISLLPFKDLRQVLASMQTGGFVDLQEVPRDAQRQPSRTIYLWYYDPDRARDSMLQDTYKAMSRCLQRLKFERGRLKDFLEKTERSDVKGNEELYLSEGELDRLREWRAKEALLIGEVARLDDMIAVMRDY.

Disordered regions lie at residues 131 to 164, 249 to 282, and 381 to 412; these read RSDA…HVSD, RGVK…DEEN, and SLGP…HGAT. A compositionally biased stretch (acidic residues) spans 273–282; that stretch reads DDGEDEDEEN. The leucine-zipper stretch occupies residues 550-571; that stretch reads TYKAMSRCLQRLKFERGRLKDF.

This sequence belongs to the RNA polymerase beta chain family. Component of the RNA polymerase III (Pol III) complex consisting of 17 subunits.

The protein localises to the nucleus. Its function is as follows. DNA-dependent RNA polymerase catalyzes the transcription of DNA into RNA using the four ribonucleoside triphosphates as substrates. Specific core component of RNA polymerase III which synthesizes small RNAs, such as 5S rRNA and tRNAs. This is DNA-directed RNA polymerase III subunit rpc3 (rpc82) from Emericella nidulans (strain FGSC A4 / ATCC 38163 / CBS 112.46 / NRRL 194 / M139) (Aspergillus nidulans).